Consider the following 282-residue polypeptide: MKRETVQVLLEALPYIKEFHGKTFVIKFGGSAMKNENAKEAFIKDLVLLKYTGINPVIVHGGGSEISSLMNQLGIEPVFKNGYRITDEKTMEIVEMVLVGKVNKDIVMNINLHGGKAIGVCGKDGELLLAEKETKYGDIGYVGKVKKVDTTLIKGLLVEGYIPVIAPIGFGEDGTSYNINADIVAAEIAKSLEVEKLVLLTDVDGVFKDGKLLPILSSKEAEDLIEKNIVKGGMIPKLQCAISAVNSGVKSVHIINGGVEHALLLEIFSKEGIGTMIKNLEV.

Substrate is bound by residues 62 to 63, arginine 84, and asparagine 178; that span reads GG.

Belongs to the acetylglutamate kinase family. ArgB subfamily.

It localises to the cytoplasm. It catalyses the reaction N-acetyl-L-glutamate + ATP = N-acetyl-L-glutamyl 5-phosphate + ADP. The protein operates within amino-acid biosynthesis; L-arginine biosynthesis; N(2)-acetyl-L-ornithine from L-glutamate: step 2/4. Catalyzes the ATP-dependent phosphorylation of N-acetyl-L-glutamate. This chain is Acetylglutamate kinase, found in Kosmotoga olearia (strain ATCC BAA-1733 / DSM 21960 / TBF 19.5.1).